Here is a 148-residue protein sequence, read N- to C-terminus: Hemoglobin subunit beta (148 aa).

The region spanning 3-148 (DWTDAERSAI…VVSALGRQYH (146 aa)) is the Globin domain. Heme b is bound by residues H64 and H93.

The protein belongs to the globin family. Heterotetramer of two alpha chains and two beta chains. As to expression, red blood cells.

In terms of biological role, involved in oxygen transport from gills to the various peripheral tissues. The sequence is that of Hemoglobin subunit beta (hbb) from Salmo salar (Atlantic salmon).